Consider the following 312-residue polypeptide: Homoserine kinase (312 aa).

94–104 contacts ATP; sequence PLGRGLGSSAA.

Belongs to the GHMP kinase family. Homoserine kinase subfamily.

It localises to the cytoplasm. It carries out the reaction L-homoserine + ATP = O-phospho-L-homoserine + ADP + H(+). It participates in amino-acid biosynthesis; L-threonine biosynthesis; L-threonine from L-aspartate: step 4/5. In terms of biological role, catalyzes the ATP-dependent phosphorylation of L-homoserine to L-homoserine phosphate. This chain is Homoserine kinase, found in Caldanaerobacter subterraneus subsp. tengcongensis (strain DSM 15242 / JCM 11007 / NBRC 100824 / MB4) (Thermoanaerobacter tengcongensis).